The following is a 270-amino-acid chain: Cell division protein DivIB (270 aa).

Residues 1 to 38 (MTRRNNPELNDEREPIDKIKASIDLKKKTIRRNKRKRR) lie on the Cytoplasmic side of the membrane. Residues 39 to 59 (LIKMLQFLIVIGVLIGIYYFD) form a helical membrane-spanning segment. The Extracellular segment spans residues 60-270 (KSDASRVHNV…QSAVVKACGS (211 aa)). The region spanning 64–135 (SRVHNVRVNG…INLNVTEKKA (72 aa)) is the POTRA domain.

The protein belongs to the FtsQ/DivIB family. DivIB subfamily.

Its subcellular location is the cell membrane. Cell division protein that may be involved in stabilizing or promoting the assembly of the division complex. The polypeptide is Cell division protein DivIB (Erysipelothrix rhusiopathiae (strain Fujisawa)).